We begin with the raw amino-acid sequence, 1343 residues long: DNA-directed RNA polymerase subunit beta (1343 aa).

Belongs to the RNA polymerase beta chain family. As to quaternary structure, the RNAP catalytic core consists of 2 alpha, 1 beta, 1 beta' and 1 omega subunit. When a sigma factor is associated with the core the holoenzyme is formed, which can initiate transcription.

The enzyme catalyses RNA(n) + a ribonucleoside 5'-triphosphate = RNA(n+1) + diphosphate. Functionally, DNA-dependent RNA polymerase catalyzes the transcription of DNA into RNA using the four ribonucleoside triphosphates as substrates. This chain is DNA-directed RNA polymerase subunit beta, found in Shewanella loihica (strain ATCC BAA-1088 / PV-4).